A 199-amino-acid chain; its full sequence is ATP-dependent Clp protease proteolytic subunit (199 aa).

Ser97 serves as the catalytic Nucleophile. Residue His122 is part of the active site.

Belongs to the peptidase S14 family. Fourteen ClpP subunits assemble into 2 heptameric rings which stack back to back to give a disk-like structure with a central cavity, resembling the structure of eukaryotic proteasomes.

The protein localises to the cytoplasm. It catalyses the reaction Hydrolysis of proteins to small peptides in the presence of ATP and magnesium. alpha-casein is the usual test substrate. In the absence of ATP, only oligopeptides shorter than five residues are hydrolyzed (such as succinyl-Leu-Tyr-|-NHMec, and Leu-Tyr-Leu-|-Tyr-Trp, in which cleavage of the -Tyr-|-Leu- and -Tyr-|-Trp bonds also occurs).. Functionally, cleaves peptides in various proteins in a process that requires ATP hydrolysis. Has a chymotrypsin-like activity. Plays a major role in the degradation of misfolded proteins. This chain is ATP-dependent Clp protease proteolytic subunit, found in Geobacter sulfurreducens (strain ATCC 51573 / DSM 12127 / PCA).